The primary structure comprises 124 residues: Small ribosomal subunit protein eS6 (124 aa).

Belongs to the eukaryotic ribosomal protein eS6 family.

The protein is Small ribosomal subunit protein eS6 of Methanococcus maripaludis (strain DSM 14266 / JCM 13030 / NBRC 101832 / S2 / LL).